The chain runs to 237 residues: Isoprenyl transferase (237 aa).

Residue Asp14 is part of the active site. Asp14 contributes to the Mg(2+) binding site. Substrate-binding positions include 15 to 18 (GNGR), Trp19, Arg27, His31, and 59 to 61 (STE). The active-site Proton acceptor is Asn62. Residues Trp63, Arg65, Arg184, and 190–192 (RIS) each bind substrate. Glu203 is a Mg(2+) binding site.

Belongs to the UPP synthase family. In terms of assembly, homodimer. Mg(2+) serves as cofactor.

Catalyzes the condensation of isopentenyl diphosphate (IPP) with allylic pyrophosphates generating different type of terpenoids. The protein is Isoprenyl transferase of Helicobacter hepaticus (strain ATCC 51449 / 3B1).